The primary structure comprises 1906 residues: Alpha-2-macroglobulin homolog (1906 aa).

A signal peptide spans 1–21 (MIIRVCIRCFIVLTLVLGIGG). Cys-22 carries the N-palmitoyl cysteine lipid modification. The S-diacylglycerol cysteine moiety is linked to residue Cys-22.

Belongs to the protease inhibitor I39 (alpha-2-macroglobulin) family. Bacterial alpha-2-macroglobulin subfamily.

The protein localises to the cell membrane. The chain is Alpha-2-macroglobulin homolog from Nostoc sp. (strain PCC 7120 / SAG 25.82 / UTEX 2576).